Consider the following 364-residue polypeptide: MIMELENQLSKLHELKNNLKEMGASLDLASLEKKSAELELKMQEAGFWDDVQKAQEVTQEAKRVKDKIDKFKNLNERIDDVEVLKELMEENDEETAKEIISEVKALSKEIDTLKIETILSGEYDRNNAILTLHTGVGGSDANDWTEMLLRMYTRWCEKKGYSLETIDYLPGDEAGVKSVTLKVKGEFAYGYLKAEKGIHRLVRISPFNANGKRQTSFASVEVLPELTSDQDIEINPVDLRIDTYRAGGAGGQHVNKTESAVRITHIPTGIVVQCQNERSQFSNRDTAMGMLKSKLIELKERAHKEKIEDLTGELKDMGWGSQIRSYVFHPYSMVKDHRTNVETSNVNGVMGGDIDNFIIAYLNS.

N5-methylglutamine is present on Gln-252.

The protein belongs to the prokaryotic/mitochondrial release factor family. In terms of processing, methylated by PrmC. Methylation increases the termination efficiency of RF2.

It is found in the cytoplasm. Peptide chain release factor 2 directs the termination of translation in response to the peptide chain termination codons UGA and UAA. The polypeptide is Peptide chain release factor 2 (Clostridium perfringens (strain SM101 / Type A)).